The primary structure comprises 104 residues: Toxin-like protein 14 (104 aa).

The signal sequence occupies residues 1 to 25 (MNTYNARLYIFSLALALVILKGTKC).

Contains 4 disulfide bonds. As to expression, expressed by the venom gland.

It is found in the secreted. The chain is Toxin-like protein 14 from Urodacus yaschenkoi (Inland robust scorpion).